The following is a 246-amino-acid chain: UDP-N-acetyl-D-mannosaminuronic acid transferase (246 aa).

It belongs to the glycosyltransferase 26 family.

The catalysed reaction is UDP-N-acetyl-alpha-D-mannosaminouronate + N-acetyl-alpha-D-glucosaminyl-di-trans,octa-cis-undecaprenyl diphosphate = beta-D-ManNAcA-(1-&gt;4)-alpha-D-GlcNAc-di-trans,octa-cis-undecaprenyl diphosphate + UDP + H(+). It participates in bacterial outer membrane biogenesis; enterobacterial common antigen biosynthesis. In terms of biological role, catalyzes the synthesis of Und-PP-GlcNAc-ManNAcA (Lipid II), the second lipid-linked intermediate involved in enterobacterial common antigen (ECA) synthesis. The protein is UDP-N-acetyl-D-mannosaminuronic acid transferase of Salmonella dublin (strain CT_02021853).